We begin with the raw amino-acid sequence, 467 residues long: ATP synthase subunit beta (467 aa).

150–157 contacts ATP; it reads GGAGVGKT.

It belongs to the ATPase alpha/beta chains family. As to quaternary structure, F-type ATPases have 2 components, CF(1) - the catalytic core - and CF(0) - the membrane proton channel. CF(1) has five subunits: alpha(3), beta(3), gamma(1), delta(1), epsilon(1). CF(0) has three main subunits: a(1), b(2) and c(9-12). The alpha and beta chains form an alternating ring which encloses part of the gamma chain. CF(1) is attached to CF(0) by a central stalk formed by the gamma and epsilon chains, while a peripheral stalk is formed by the delta and b chains.

Its subcellular location is the cell inner membrane. The enzyme catalyses ATP + H2O + 4 H(+)(in) = ADP + phosphate + 5 H(+)(out). Its function is as follows. Produces ATP from ADP in the presence of a proton gradient across the membrane. The catalytic sites are hosted primarily by the beta subunits. This is ATP synthase subunit beta from Aliivibrio fischeri (strain ATCC 700601 / ES114) (Vibrio fischeri).